The sequence spans 795 residues: MKFSELWLREWVNPAIDSEALVDQITMSGLEVDGVEPVAGRFTGVVVGRVVECRQHSNADKLRVTKVDVGGERLLDIVCGAPNCRAGLRVAVAMLGAVLPGDFKIKVAKLRGEPSEGMLCSFSELGITGDHDGIIELPAEAPIGQDIRDYLQLDDNTIDISVTPNRADCLGLLGIARDVAVRNRLPLHMPAIETVTPEISDTLPIRVDAVEACPRYLGRVVKNINVSAATPLWMKEKLRRCGLRSVDAVVDITNYVLLELGQPMHAFDRARIEGGIVVRHARQDETLTLLDGSDVTLSLDTLVIADHGQALAMAGIFGGGAYCISPTTRDVVLECAFFNPLAITGRARRYGLHTDASHRYERGVDPALQPRAMERATALLVAICGGQPGPVIDVTSASAQPQPATITLRRKTLDRLIGHVIPDEDVSDILTRLGCQVSRTAEGWQAVAPSWRFDMAIEEDLIEEVARVYGYDAIPNVPVRANLVMPHHREAALPLARVKTLLVDRGYQEAITYSFVDPKTQVLLHPQQAPLVLPSPISQDMSAMRLSLWTGLLGAVVYNQNRQQQRVRLFESGLRFVPDNAADLGIRQDLMLAGVIAGPRSDEHWDQLRQPVDFYDAKGDLEAILELTGKLDDIEFRAQRHPALHPGQSAAIYLNNEAIGFIGVIHPELEAKLNLNGCTLVFELLWEKVAERKVPEANDISRFPANRRDIAVVVADDVAVADIIAECKKVGANQLVGVNLFDVYRGRGVAEGFKSLAISLILQDTARTLEEEEIAATVAKCVAALKQRFQASLRD.

The tRNA-binding domain occupies 39 to 148 (AGRFTGVVVG…AEAPIGQDIR (110 aa)). In terms of domain architecture, B5 spans 401–476 (PQPATITLRR…RVYGYDAIPN (76 aa)). The Mg(2+) site is built by D454, D460, E463, and E464. Positions 701–794 (SRFPANRRDI…LKQRFQASLR (94 aa)) constitute an FDX-ACB domain.

The protein belongs to the phenylalanyl-tRNA synthetase beta subunit family. Type 1 subfamily. In terms of assembly, tetramer of two alpha and two beta subunits. Mg(2+) is required as a cofactor.

Its subcellular location is the cytoplasm. The enzyme catalyses tRNA(Phe) + L-phenylalanine + ATP = L-phenylalanyl-tRNA(Phe) + AMP + diphosphate + H(+). This chain is Phenylalanine--tRNA ligase beta subunit, found in Sodalis glossinidius (strain morsitans).